The following is an 82-amino-acid chain: Small ribosomal subunit protein bS18 (82 aa).

The interval 1–20 (MVDINQIPTRRPFHRRRKTC) is disordered.

It belongs to the bacterial ribosomal protein bS18 family. As to quaternary structure, part of the 30S ribosomal subunit. Forms a tight heterodimer with protein bS6.

Its function is as follows. Binds as a heterodimer with protein bS6 to the central domain of the 16S rRNA, where it helps stabilize the platform of the 30S subunit. This Mesorhizobium japonicum (strain LMG 29417 / CECT 9101 / MAFF 303099) (Mesorhizobium loti (strain MAFF 303099)) protein is Small ribosomal subunit protein bS18.